Here is a 297-residue protein sequence, read N- to C-terminus: N-acetylneuraminate lyase (297 aa).

Positions 47 and 48 each coordinate aceneuramate. Tyr-137 functions as the Proton donor in the catalytic mechanism. The active-site Schiff-base intermediate with substrate is Lys-165. Residues Thr-167, Gly-189, Asp-191, Glu-192, and Ser-208 each coordinate aceneuramate.

The protein belongs to the DapA family. NanA subfamily. In terms of assembly, homotetramer.

The protein localises to the cytoplasm. The catalysed reaction is aceneuramate = aldehydo-N-acetyl-D-mannosamine + pyruvate. It functions in the pathway amino-sugar metabolism; N-acetylneuraminate degradation; D-fructose 6-phosphate from N-acetylneuraminate: step 1/5. Its function is as follows. Catalyzes the reversible aldol cleavage of N-acetylneuraminic acid (sialic acid; Neu5Ac) to form pyruvate and N-acetylmannosamine (ManNAc) via a Schiff base intermediate. This is N-acetylneuraminate lyase from Escherichia coli (strain SE11).